The following is a 255-amino-acid chain: uncharacterized protein (255 aa).

Positions 1 to 23 (MKRLNKLVLGIIFLFLVISITAG) are cleaved as a signal peptide. A lipid anchor (N-palmitoyl cysteine) is attached at cysteine 24. A lipid anchor (S-diacylglycerol cysteine) is attached at cysteine 24.

Belongs to the staphylococcal tandem lipoprotein family.

The protein localises to the cell membrane. This is an uncharacterized protein from Staphylococcus aureus (strain Mu50 / ATCC 700699).